We begin with the raw amino-acid sequence, 276 residues long: Putative hydro-lyase Xaut_1503 (276 aa).

This sequence belongs to the D-glutamate cyclase family.

This Xanthobacter autotrophicus (strain ATCC BAA-1158 / Py2) protein is Putative hydro-lyase Xaut_1503.